Reading from the N-terminus, the 103-residue chain is Small ribosomal subunit protein uS10 (103 aa).

Belongs to the universal ribosomal protein uS10 family. In terms of assembly, part of the 30S ribosomal subunit.

Its function is as follows. Involved in the binding of tRNA to the ribosomes. The polypeptide is Small ribosomal subunit protein uS10 (Blochmanniella pennsylvanica (strain BPEN)).